Reading from the N-terminus, the 298-residue chain is MKQDLARIEQFLDALWLEKNLAENTLNAYRRDLSMMVEWLHHRGLTLATAQSDDLQALLAERLEGGYKATSSARLLSAVRRLFQYLYREKFREDDPSAHLASPKLPQRLPKDLSEAQVERLLQAPLIDQPLELRDKAMLEVLYATGLRVSELVGLTMSDISLRQGVVRVIGKGNKERLVPLGEEAVYWLETYLEHGRPWLLNGVSIDVLFPSQRAQQMTRQTLWHRIKHYAVLAGIDSEKLSPHVLRHAFATHLLNHGADLRVVQMLLGHSDLSTTQIYTHVATERLRQLHQQHHPRA.

Residues 2–87 enclose the Core-binding (CB) domain; sequence KQDLARIEQF…AVRRLFQYLY (86 aa). Positions 108–292 constitute a Tyr recombinase domain; it reads RLPKDLSEAQ…ATERLRQLHQ (185 aa). Active-site residues include Arg148, Lys172, His244, Arg247, and His270. Tyr279 acts as the O-(3'-phospho-DNA)-tyrosine intermediate in catalysis.

Belongs to the 'phage' integrase family. XerD subfamily. Forms a cyclic heterotetrameric complex composed of two molecules of XerC and two molecules of XerD, in which XerC interacts with XerD via its C-terminal region, XerD interacts with XerC via its C-terminal region and so on.

Its subcellular location is the cytoplasm. With respect to regulation, ftsK may regulate the catalytic switch between XerC and XerD in the heterotetrameric complex during the two steps of the recombination process. Site-specific tyrosine recombinase, which acts by catalyzing the cutting and rejoining of the recombining DNA molecules. Binds cooperatively to specific DNA consensus sequences that are separated from XerC binding sites by a short central region, forming the heterotetrameric XerC-XerD complex that recombines DNA substrates. The complex is essential to convert dimers of the bacterial chromosome into monomers to permit their segregation at cell division. It also contributes to the segregational stability of plasmids. In the complex XerD specifically exchanges the bottom DNA strands. The polypeptide is Tyrosine recombinase XerD (Escherichia coli O157:H7).